A 516-amino-acid polypeptide reads, in one-letter code: Delta(24)-sterol reductase (516 aa).

An N-terminal signal peptide occupies residues Met-1–Gly-22. Residues Leu-23 to Arg-31 are Lumenal-facing. A helical transmembrane segment spans residues Trp-32 to Val-52. The Cytoplasmic portion of the chain corresponds to Arg-53 to His-516. One can recognise an FAD-binding PCMH-type domain in the interval Phe-58–Ala-234. Thr-163–Ser-175 provides a ligand contact to FAD.

The protein belongs to the FAD-binding oxidoreductase/transferase type 4 family. It depends on FAD as a cofactor.

It localises to the endoplasmic reticulum membrane. It is found in the golgi apparatus membrane. It catalyses the reaction 5alpha-cholest-8-en-3beta-ol + NADP(+) = zymosterol + NADPH + H(+). It carries out the reaction cholesterol + NADP(+) = desmosterol + NADPH + H(+). The enzyme catalyses lanosterol + NADPH + H(+) = 24,25-dihydrolanosterol + NADP(+). The protein operates within steroid biosynthesis; cholesterol biosynthesis. Catalyzes the reduction of the delta-24 double bond of sterol intermediates during cholesterol biosynthesis. In addition to its cholesterol-synthesizing activity, can protect cells from oxidative stress by reducing caspase 3 activity during apoptosis induced by oxidative stress. Also protects against amyloid-beta peptide-induced apoptosis. This is Delta(24)-sterol reductase (Dhcr24) from Mus musculus (Mouse).